The chain runs to 255 residues: Type III pantothenate kinase (255 aa).

Residue 6-13 (DVGNTNTV) coordinates ATP. Substrate is bound by residues Tyr100 and 107 to 110 (GADR). Asp109 functions as the Proton acceptor in the catalytic mechanism. Asp129 contacts K(+). Position 132 (Thr132) interacts with ATP. Residue Thr184 participates in substrate binding.

It belongs to the type III pantothenate kinase family. Homodimer. It depends on NH4(+) as a cofactor. The cofactor is K(+).

It localises to the cytoplasm. It carries out the reaction (R)-pantothenate + ATP = (R)-4'-phosphopantothenate + ADP + H(+). Its pathway is cofactor biosynthesis; coenzyme A biosynthesis; CoA from (R)-pantothenate: step 1/5. In terms of biological role, catalyzes the phosphorylation of pantothenate (Pan), the first step in CoA biosynthesis. This chain is Type III pantothenate kinase, found in Syntrophomonas wolfei subsp. wolfei (strain DSM 2245B / Goettingen).